The sequence spans 208 residues: Probable adenylyl-sulfate kinase (208 aa).

An ATP-binding site is contributed by G38–S45. S112 serves as the catalytic Phosphoserine intermediate.

Belongs to the APS kinase family.

The enzyme catalyses adenosine 5'-phosphosulfate + ATP = 3'-phosphoadenylyl sulfate + ADP + H(+). Its pathway is sulfur metabolism; hydrogen sulfide biosynthesis; sulfite from sulfate: step 2/3. Catalyzes the synthesis of activated sulfate. This chain is Probable adenylyl-sulfate kinase, found in Halalkalibacterium halodurans (strain ATCC BAA-125 / DSM 18197 / FERM 7344 / JCM 9153 / C-125) (Bacillus halodurans).